Reading from the N-terminus, the 231-residue chain is Cilia- and flagella-associated protein 299 (231 aa).

It is found in the cytoplasm. The protein resides in the nucleus. May be involved in spermatogenesis. The protein is Cilia- and flagella-associated protein 299 of Bos taurus (Bovine).